A 340-amino-acid polypeptide reads, in one-letter code: Ferrochelatase (340 aa).

Positions 189 and 292 each coordinate Fe cation.

It belongs to the ferrochelatase family.

The protein resides in the cytoplasm. It carries out the reaction heme b + 2 H(+) = protoporphyrin IX + Fe(2+). It participates in porphyrin-containing compound metabolism; protoheme biosynthesis; protoheme from protoporphyrin-IX: step 1/1. Functionally, catalyzes the ferrous insertion into protoporphyrin IX. This chain is Ferrochelatase, found in Pseudomonas paraeruginosa (strain DSM 24068 / PA7) (Pseudomonas aeruginosa (strain PA7)).